The primary structure comprises 30 residues: Photosystem I reaction center subunit XII (30 aa).

The helical transmembrane segment at 7–26 (IMVALFAALFTGILALRLGT) threads the bilayer.

It belongs to the PsaM family.

It localises to the plastid. It is found in the chloroplast thylakoid membrane. In Mesostigma viride (Green alga), this protein is Photosystem I reaction center subunit XII.